The following is a 73-amino-acid chain: Methionyl-tRNA formyltransferase (73 aa).

The protein belongs to the Fmt family.

It catalyses the reaction L-methionyl-tRNA(fMet) + (6R)-10-formyltetrahydrofolate = N-formyl-L-methionyl-tRNA(fMet) + (6S)-5,6,7,8-tetrahydrofolate + H(+). Attaches a formyl group to the free amino group of methionyl-tRNA(fMet). The formyl group appears to play a dual role in the initiator identity of N-formylmethionyl-tRNA by promoting its recognition by IF2 and preventing the misappropriation of this tRNA by the elongation apparatus. This chain is Methionyl-tRNA formyltransferase (fmt), found in Rickettsia akari.